The chain runs to 359 residues: Fructose-bisphosphate aldolase, cytoplasmic isozyme 2 (359 aa).

Substrate contacts are provided by R52 and K143. E184 acts as the Proton acceptor in catalysis. The Schiff-base intermediate with dihydroxyacetone-P role is filled by K226.

The protein belongs to the class I fructose-bisphosphate aldolase family.

It is found in the cytoplasm. The enzyme catalyses beta-D-fructose 1,6-bisphosphate = D-glyceraldehyde 3-phosphate + dihydroxyacetone phosphate. It functions in the pathway carbohydrate degradation; glycolysis; D-glyceraldehyde 3-phosphate and glycerone phosphate from D-glucose: step 4/4. The protein is Fructose-bisphosphate aldolase, cytoplasmic isozyme 2 of Pisum sativum (Garden pea).